Consider the following 434-residue polypeptide: Eukaryotic translation initiation factor 3 subunit E (434 aa).

The 174-residue stretch at 219–392 folds into the PCI domain; it reads FFNHPKGRDL…GHVVMGTQPL (174 aa).

Belongs to the eIF-3 subunit E family. In terms of assembly, component of the eukaryotic translation initiation factor 3 (eIF-3) complex. The eIF-3 complex interacts with pix. Interacts with mxt.

The protein resides in the cytoplasm. In terms of biological role, component of the eukaryotic translation initiation factor 3 (eIF-3) complex, which is involved in protein synthesis of a specialized repertoire of mRNAs and, together with other initiation factors, stimulates binding of mRNA and methionyl-tRNAi to the 40S ribosome. The eIF-3 complex specifically targets and initiates translation of a subset of mRNAs involved in cell proliferation. In Drosophila persimilis (Fruit fly), this protein is Eukaryotic translation initiation factor 3 subunit E (eIF3-S6).